Reading from the N-terminus, the 424-residue chain is WD-40 repeat-containing protein MSI3 (424 aa).

At methionine 1 the chain carries N-acetylmethionine. WD repeat units lie at residues 167-207 (GHEQ…TDKV), 216-256 (GHQS…MQHQ), 259-299 (VHER…APLH), 303-343 (KHEG…DEQL), and 362-402 (GHKA…YRED). The DWD box motif lies at 233–249 (IFGSAGDDCQLVIWDLR). The disordered stretch occupies residues 394–424 (MAESIYREDDEDEDDDDEGNQNAQHSNENQK). Over residues 401-412 (EDDEDEDDDDEG) the composition is skewed to acidic residues. Polar residues predominate over residues 413-424 (NQNAQHSNENQK).

It belongs to the WD repeat RBAP46/RBAP48/MSI1 family.

It is found in the nucleus. Core histone-binding subunit that may target chromatin assembly factors, chromatin remodeling factors and histone deacetylases to their histone substrates in a manner that is regulated by nucleosomal DNA. This is WD-40 repeat-containing protein MSI3 (MSI3) from Arabidopsis thaliana (Mouse-ear cress).